A 345-amino-acid chain; its full sequence is UDP-3-O-acylglucosamine N-acyltransferase (345 aa).

The active-site Proton acceptor is H248.

This sequence belongs to the transferase hexapeptide repeat family. LpxD subfamily. Homotrimer.

The catalysed reaction is a UDP-3-O-[(3R)-3-hydroxyacyl]-alpha-D-glucosamine + a (3R)-hydroxyacyl-[ACP] = a UDP-2-N,3-O-bis[(3R)-3-hydroxyacyl]-alpha-D-glucosamine + holo-[ACP] + H(+). It functions in the pathway bacterial outer membrane biogenesis; LPS lipid A biosynthesis. Catalyzes the N-acylation of UDP-3-O-acylglucosamine using 3-hydroxyacyl-ACP as the acyl donor. Is involved in the biosynthesis of lipid A, a phosphorylated glycolipid that anchors the lipopolysaccharide to the outer membrane of the cell. This is UDP-3-O-acylglucosamine N-acyltransferase from Trichodesmium erythraeum (strain IMS101).